The following is a 303-amino-acid chain: Oxygen-dependent coproporphyrinogen-III oxidase (303 aa).

Ser94 is a binding site for substrate. A divalent metal cation contacts are provided by His98 and His108. His108 acts as the Proton donor in catalysis. 110 to 112 (NVR) contributes to the substrate binding site. A divalent metal cation-binding residues include His147 and His177. The tract at residues 242 to 277 (YVEFNLVYDRGTLFGLQTGGRTESILMSLPPLVRWE) is important for dimerization. 260 to 262 (GGR) serves as a coordination point for substrate.

This sequence belongs to the aerobic coproporphyrinogen-III oxidase family. In terms of assembly, homodimer. It depends on a divalent metal cation as a cofactor.

The protein localises to the cytoplasm. The enzyme catalyses coproporphyrinogen III + O2 + 2 H(+) = protoporphyrinogen IX + 2 CO2 + 2 H2O. It participates in porphyrin-containing compound metabolism; protoporphyrin-IX biosynthesis; protoporphyrinogen-IX from coproporphyrinogen-III (O2 route): step 1/1. Its function is as follows. Involved in the heme biosynthesis. Catalyzes the aerobic oxidative decarboxylation of propionate groups of rings A and B of coproporphyrinogen-III to yield the vinyl groups in protoporphyrinogen-IX. The polypeptide is Oxygen-dependent coproporphyrinogen-III oxidase (Saccharophagus degradans (strain 2-40 / ATCC 43961 / DSM 17024)).